Consider the following 148-residue polypeptide: Leghemoglobin 2 (148 aa).

Residues 2–148 (GFTEKQEALV…LSAAIKKAMS (147 aa)) form the Globin domain. At Tyr-30 the chain carries Nitrated tyrosine. Ser-45 serves as a coordination point for heme b. Residue Ser-45 is modified to Phosphoserine. An O2-binding site is contributed by His-63. Residues Lys-66, His-95, and Lys-98 each coordinate heme b. Tyr-136 carries the post-translational modification Nitrated tyrosine.

This sequence belongs to the plant globin family. As to quaternary structure, monomer. Post-translationally, nitrated in effective nodules and particularly in hypoxic conditions; this mechanism may play a protective role in the symbiosis by buffering toxic peroxynitrite NO(2)(-). Nitration level decrease during nodule senescence. Phosphorylation at Ser-45 disrupts the molecular environment of its porphyrin ring oxygen binding pocket, thus leading to a reduced oxygen consumption and to the delivery of oxygen O(2) to symbiosomes. In terms of tissue distribution, stem nodules.

The protein resides in the cytoplasm. Its subcellular location is the cytosol. The protein localises to the nucleus. Its function is as follows. Leghemoglobin that reversibly binds oxygen O(2) through a pentacoordinated heme iron. In stem nodules, facilitates the diffusion of oxygen to the bacteroids while preventing the bacterial nitrogenase from being inactivated by buffering dioxygen, nitric oxide and carbon monoxide, and promoting the formation of reactive oxygen species (ROS, e.g. H(2)O(2)). This role is essential for symbiotic nitrogen fixation (SNF). The sequence is that of Leghemoglobin 2 from Sesbania rostrata.